We begin with the raw amino-acid sequence, 680 residues long: Tumor protein 63 (680 aa).

A transcription activation region spans residues 1–107; that stretch reads MNFETSRCAT…MQDSDLSDPM (107 aa). Positions 123-157 are enriched in polar residues; the sequence is QIQNGSSSTSPYNTDHAQNSVTAPSPYAQPSSTFD. The segment at 123 to 171 is disordered; the sequence is QIQNGSSSTSPYNTDHAQNSVTAPSPYAQPSSTFDALSPSPAIPSNTDY. The DNA-binding element occupies 170-362; the sequence is DYPGPHSFDV…KADEDSIRKQ (193 aa). Positions 244, 247, 308, and 312 each coordinate Zn(2+). Positions 351-360 are enriched in basic and acidic residues; it reads DRKADEDSIR. Disordered regions lie at residues 351–393 and 435–472; these read DRKA…IKKR and YRQQQQQQHQHLLQKQTSIQSPSSYGNSSPPLNKMNSM. The segment at 352 to 388 is interaction with HIPK2; the sequence is RKADEDSIRKQQVSDSTKNGDGTKRPFRQNTHGIQMT. 2 stretches are compositionally biased toward polar residues: residues 361 to 371 and 379 to 389; these read KQQVSDSTKNG and RQNTHGIQMTS. Residues 394 to 443 form an oligomerization region; sequence RSPDDELLYLPVRGRETYEMLLKIKESLELMQYLPQHTIETYRQQQQQQH. Low complexity predominate over residues 437–450; the sequence is QQQQQQHQHLLQKQ. Residues 451–472 are compositionally biased toward polar residues; it reads TSIQSPSSYGNSSPPLNKMNSM. The SAM domain occupies 541–607; sequence PPYPTDCSIV…WKGILDHRQL (67 aa). Residues 610-680 form a transactivation inhibition region; the sequence is FSSPSHLLRT…KQQRIKEEGE (71 aa). Residue K676 forms a Glycyl lysine isopeptide (Lys-Gly) (interchain with G-Cter in SUMO) linkage.

It belongs to the p53 family. In terms of assembly, binds DNA as a homotetramer. Isoform composition of the tetramer may determine transactivation activity. Isoforms Alpha and Gamma interact with HIPK2. Interacts with SSRP1, leading to stimulate coactivator activity. Isoform 1 and isoform 2 interact with WWP1. Interacts with PDS5A. Isoform 5 (via activation domain) interacts with NOC2L. It depends on Zn(2+) as a cofactor. May be sumoylated. In terms of processing, ubiquitinated. Polyubiquitination involves WWP1 and leads to proteasomal degradation of this protein. As to expression, widely expressed, notably in heart, kidney, placenta, prostate, skeletal muscle, testis and thymus, although the precise isoform varies according to tissue type. Progenitor cell layers of skin, breast, eye and prostate express high levels of DeltaN-type isoforms. Isoform 10 is predominantly expressed in skin squamous cell carcinomas, but not in normal skin tissues.

It is found in the nucleus. Its function is as follows. Acts as a sequence specific DNA binding transcriptional activator or repressor. The isoforms contain a varying set of transactivation and auto-regulating transactivation inhibiting domains thus showing an isoform specific activity. Isoform 2 activates RIPK4 transcription. May be required in conjunction with TP73/p73 for initiation of p53/TP53 dependent apoptosis in response to genotoxic insults and the presence of activated oncogenes. Involved in Notch signaling by probably inducing JAG1 and JAG2. Plays a role in the regulation of epithelial morphogenesis. The ratio of DeltaN-type and TA*-type isoforms may govern the maintenance of epithelial stem cell compartments and regulate the initiation of epithelial stratification from the undifferentiated embryonal ectoderm. Required for limb formation from the apical ectodermal ridge. Activates transcription of the p21 promoter. The sequence is that of Tumor protein 63 (TP63) from Homo sapiens (Human).